Reading from the N-terminus, the 117-residue chain is Virion membrane protein A21 (117 aa).

The chain crosses the membrane as a helical; Signal-anchor for type III membrane protein span at residues 1–21; sequence MITLFLILCYFILIFNIIVPA. The Virion surface portion of the chain corresponds to 22 to 117; the sequence is ISEKMRRERA…RAYSDLFFTT (96 aa).

The protein belongs to the chordopoxvirinae A21 family. As to quaternary structure, envelope protein part of a stable entry-fusion complex (EFC) which is at least composed of proteins A16, A21, A28, G3, G9, H2, J5, and L5. Formation of the viral membrane is necessary for the assembly of the complex. Contains two intramolecular disulfide bonds. They are created by the viral disulfide bond formation pathway, a poxvirus-specific pathway that operates on the cytoplasmic side of the MV membranes.

Its subcellular location is the virion membrane. Its function is as follows. Envelope protein part of the entry-fusion complex responsible for the virus membrane fusion with host cell membrane during virus entry. In Vaccinia virus (strain Ankara) (VACV), this protein is Virion membrane protein A21.